A 583-amino-acid polypeptide reads, in one-letter code: Tetratricopeptide repeat protein 39C (583 aa).

Residues 1 to 22 are disordered; it reads MAGSEQQRPRRRDDGDSDAAAA. TPR repeat units follow at residues 315-348, 353-386, and 485-518; these read SLFMFFKGRIQRLECQINSALTSFHTALELAVDQ, HVCLYEIGWCSMIELNFKDAFDSFERLKNESRWS, and GLKYLLLGAIHKCLGNSEDAVQYFQRAVKDELCR.

The protein belongs to the TTC39 family.

This chain is Tetratricopeptide repeat protein 39C (TTC39C), found in Homo sapiens (Human).